Reading from the N-terminus, the 618-residue chain is Chaperone protein HscA homolog (618 aa).

Belongs to the heat shock protein 70 family.

Chaperone involved in the maturation of iron-sulfur cluster-containing proteins. Has a low intrinsic ATPase activity which is markedly stimulated by HscB. The polypeptide is Chaperone protein HscA homolog (Variovorax paradoxus (strain S110)).